The sequence spans 407 residues: Probable acyl-CoA dehydrogenase FadE2 (407 aa).

Belongs to the acyl-CoA dehydrogenase family. It depends on FAD as a cofactor.

The catalysed reaction is a 2,3-saturated acyl-CoA + A = a 2,3-dehydroacyl-CoA + AH2. This is Probable acyl-CoA dehydrogenase FadE2 from Mycobacterium tuberculosis (strain ATCC 25618 / H37Rv).